The following is a 3564-amino-acid chain: MWTRLAFCCWALALVSGWTNFQPMAPSLNFSFRLFPEASPGALGRLAVPPRSGEEEAVGSKVERLGRTFRSRVRRLRELSDRLELVFLVDESSSVGQTNFLNELKFVRKLLSDFPVVSTATRVAIVTFSSKNNVVARVDYISTSRAHQHKCALLSREIPAITYRGGGTYTMGAFQQAAQILRHSRENSTKVIFLITDGYSNGGDPRPIAASLRDFGVEIFTFGIWQGNIRELNDMASTPKEEHCYLLHSFEEFEALARRALHEDLPSGSFIQEDMAHCSYLCEAGRDCCDRMASCKCGTHTGQFECICEKGYYGKGLQYECTACPPGTYKPEASPGGISTCIPCPDENHTSPPGSTAPEDCVCREGYQRSGQTCEVVHCPALKPPENGFFIQNTCKNHFNAACGVRCRPGFDLVGSSIHLCQPNGLWSGTESFCRVRTCPHLRQPKHGHISCSTVEMSYNTVCLVTCNEGYRLEGHAKLTCQGNAQWDGTEPRCVERHCATFQKPKGVIISPPSCGKQPAKPGMICQLGCRQGYILSGIREVRCATSGKWSARVQTAVCKDVEAPQISCPNDIKAKTEGQQDSANVTWQVPTAKDNSGEKVSVHVHPAFSPPYLFPIGEVAITYTATDSSGNQASCTFYIKVIDVEPPVIDWCRSPPPIQVVEKEHPASWDEPQFSDNSGAELVITSSHTQGDLFPHGETVVWYTATDPSGNNRTCDIHIVIKGSPCEVPFTPVNGDFICAQDSAGVNCSLTCREGYDFTEGSTEKYYCAFEDGIWRPPYSTEWPDCAIKRFANHGFKSFEMLYKTTRCDDMDLFKKFSAAFETTLGKMVPSFCSDADDIDCRLEDLTKKYCIEYNYNYENGFAIGPGGWGAGNRLDYSYDHFLDVVQETPADVGKTRSSRIKRTVPLSDPQIQLIFNITASVPLPEERNDTVELENQQRLIRTLETITNRLKSTLNKGPMYSFQLASETVVADSNSLETEKAFLFCRPGSVLRGRMCVNCPLGTSYSLEHSTCESCLMGSYQDEEGQLECKLCPPRTHTEYLHSRSISECKAQCKQGTYSSSGLETCESCPLGTYQPDFGSRSCLPCPETTTTVKRGAVDISACGVPCPVGEFSRSGLTPCYPCPRDYYQPNAGKSFCLACPFYGTTTITGATSITDCSSFSSTFSAAEESIVPLAAPGPTQNKYEVFHECFLNPCHNSGTCQQLGRGYVCLCPPGYTGLKCETDIDECSSLPCLNGGICRDKVGGFTCECSSGYTGQICEENINECSSSPCLNKGTCTDGLASYRCTCVSGYVGVHCETDVNECQSSPCLNNAVCKDQVGGFSCKCPPGFLGTRCEKNVDECLSQPCQNGATCKDGANSFRCQCPAGFTGPHCELNINECQSNPCRNQATCVDELNSYSCKCRPGFSGRRCETEQPSGFNLDFEVSGIYGYVLLDGVLPTLHAITCAFWMKSSDVINYGTPISYALEGNKDNTFLLTDYNGWVLYVNGKEKITNCPSVNDGIWHHIAITWTSTGGAWRVYIDGELSDSGTGLSVGKAIPGGGALVLGQEQDKKGEGFNPAESFVGSISQLNLWDYVLSPQQVKSLASSCPEELSRGNVLAWPDFVSGITGKVKVDSSSIFCSDCPSLEGSVPHLRPASGDRKPGSKVSLFCDPGFQMVGNPVQYCLNQGQWSQPLPHCERIRCGLPPTLENGFYSAEDLHAGSTVTYQCTSGYYLLGDSRMFCTDNGSWNGISPSCLDVDECAVGSDCSEHASCLNTNGSYICSCKPPYTGDGKNCAEPVKCKAPENPENGHSLGKIYSVGAEVTFSCEEGHQLVGVRKITCLESGEWDHLRPSCEAISCGAPPVPENGGVDGSAFTYGSKVRYRCDKGYTLAGDEESACLASGSWSHSSPVCELVKCSQPENINNGKYILSGLTYLSIASYSCEDGYSLQGPSLIECTASGSWDRAPPSCQLVSCGEPPMVKDALTTGSNFTFGNMVTYTCKEGYTLAGPDTIICQANGKWNSSNHQCLAVSCDEPPNVDHASPETAHRLFGDTAFYYCADGYSLADNSQLICNAQGNWVPPEGQAVPRCIAHFCEKPPSVSYSILESVSKAKFAAGSVVSFKCMEGFVLNTSAKIECLRGGQWSPSPLSVQCIPVRCGEPPSITNGYPSGTNYSFGAVVAYSCHKGFYIKGEKKSTCEATGQWSRPLPTCHPVSCNEPPKVENGFLEHTTGRTFESEARFQCNPGYKAVGSPVFVCQANRHWHSDAPLSCTPLNCGKPPPIQNGFLRGESFEVGSKVQFVCNEGYELVGDNSWTCQKSGKWSKKPSPKCVPTKCAEPPLLENQLVLKELTSEVGVMTISCKEGHALQGPSVLKCLPSGQWNGSFPVCKLVLCQSPPLIPFGVPASSGALHFGSTVKYLCVDGFFLRGNPIILCQVDGTWSSPLPECVPVECPQPEEILNGIIHVQGLAYLSTTLYTCKPGFELVGNTTTLCGENGQWLGGKPMCRPIECPEPKEILNGQFSSVSFQYGQTITYSCDRGFRLEGPKSLTCLETGNWDMDAPSCNAIHCSDPQPIENGFVEGADYRYGAMIIYSCFPGFQVVGHAMQTCEETGWSSSSPTCVPIDCGLPPHIDFGDCTRVSDGQGYFVQEDDMMEVPYLTPHPQHLEATAKASEITEESLVPHASQFLYGTTVSYRCEPGYELLGIPVLVCQEDGTWNGTAPSCISIECDLPVAPENGFLHFTQTTMGSAAQYSCKPGHVLEGSHLRLCLQNKQWSGTVPRCEVISCSEPNPLGNGSIKGNDYSYLGVLHYECDSGYVLNGTEKRTCQENKQWDGHEPVCLPVDCGSPPVPTNGQVTGEEYTFQKEIAYSCGEGFILEGARSRVCLTNGSWSGTTPSCVPVRCPAPPQVANGVTDGLDYGFKKEVTFHCLEGYVLQGTPKLTCQSNGTWDAEVPICKPATCGPPADLPQGFPNGFSFFHGGHIQYQCFTGYKLHGNPSRRCLPDGSWSGSTPSCLPCTCSTPIIQQGTVNATDLGCGKTVQIECFKGFKLLGLPEITCDANGQWSDFPLCEHADCGPLPTVPNGIVIKGSPSEDNVVTYSCRPGYIIQGSSDLICTEKGIWSEPYPTCEPVSCGPPPTVANAVATGEAHTYESKVKLRCLEGYVVDTDTDTFTCQQDGRWFPERINCSPKTCPVPSNRTRIRVHGDDFQVNRQVSVSCTEGFTYDGADRSTCQPDGTWEPPLSEESCIPVVCGQPESPEHGFVVGSEYSFGSTVVYQCDPGYELEGNRERVCQENRQWSGRVAVCRESRCEAPAEFPNGKAVLENTTSGPSLLFSCHRGYTLEGPPEAHCTANGTWSHLAPLCKPNPCPVPFVIPENALLSEREFYVNQNVSIKCREGFLLKGNGIITCNPDETWTQTNARCEKISCGPPTHVENAIARGVHYQYGDMVTFSCYSGYMLEGSLRSVCLENGTWTPPPICRAVCRFPCQNGGVCQRPNACSCPDGWMGRLCEEPICILPCLNGGRCVAPYRCDCPAGWTGSRCHTATCQSPCLNGGKCVRPNRCHCLSSWTGHDCSRKRRSGL.

Positions 1 to 17 (MWTRLAFCCWALALVSG) are cleaved as a signal peptide. Residues 84–265 (ELVFLVDESS…LARRALHEDL (182 aa)) form the VWFA domain. N-linked (GlcNAc...) asparagine glycosylation occurs at asparagine 187. Sushi domains are found at residues 377-436 (VHCP…FCRV), 437-496 (RTCP…RCVE), and 497-561 (RHCA…VCKD). Disulfide bonds link cysteine 379-cysteine 421, cysteine 407-cysteine 434, cysteine 439-cysteine 481, cysteine 467-cysteine 494, cysteine 499-cysteine 544, and cysteine 530-cysteine 559. 2 HYR domains span residues 560–644 (KDVE…KVID) and 645–724 (VEPP…VIKG). The Sushi 4 domain occupies 725 to 789 (SPCEVPFTPV…YSTEWPDCAI (65 aa)). 20 cysteine pairs are disulfide-bonded: cysteine 727–cysteine 769, cysteine 753–cysteine 787, cysteine 1192–cysteine 1203, cysteine 1197–cysteine 1212, cysteine 1214–cysteine 1223, cysteine 1230–cysteine 1241, cysteine 1235–cysteine 1250, cysteine 1252–cysteine 1261, cysteine 1268–cysteine 1279, cysteine 1273–cysteine 1288, cysteine 1290–cysteine 1299, cysteine 1306–cysteine 1317, cysteine 1311–cysteine 1326, cysteine 1328–cysteine 1337, cysteine 1344–cysteine 1355, cysteine 1349–cysteine 1364, cysteine 1366–cysteine 1375, cysteine 1382–cysteine 1393, cysteine 1387–cysteine 1402, and cysteine 1404–cysteine 1413. Residues 1188–1224 (VFHECFLNPCHNSGTCQQLGRGYVCLCPPGYTGLKCE) enclose the EGF-like 1 domain. In terms of domain architecture, EGF-like 2; calcium-binding spans 1226-1262 (DIDECSSLPCLNGGICRDKVGGFTCECSSGYTGQICE). Residues 1264 to 1300 (NINECSSSPCLNKGTCTDGLASYRCTCVSGYVGVHCE) enclose the EGF-like 3; calcium-binding domain. The EGF-like 4; calcium-binding domain maps to 1302-1338 (DVNECQSSPCLNNAVCKDQVGGFSCKCPPGFLGTRCE). Positions 1340 to 1376 (NVDECLSQPCQNGATCKDGANSFRCQCPAGFTGPHCE) constitute an EGF-like 5; calcium-binding domain. The 37-residue stretch at 1378–1414 (NINECQSNPCRNQATCVDELNSYSCKCRPGFSGRRCE) folds into the EGF-like 6; calcium-binding domain. Positions 1419-1623 (SGFNLDFEVS…VKVDSSSIFC (205 aa)) constitute a Pentraxin (PTX) domain. Sushi domains follow at residues 1624 to 1682 (SDCP…HCER) and 1683 to 1740 (IRCG…SCLD). Cystine bridges form between cysteine 1626-cysteine 1667, cysteine 1653-cysteine 1680, cysteine 1685-cysteine 1725, cysteine 1711-cysteine 1738, cysteine 1744-cysteine 1756, cysteine 1750-cysteine 1765, cysteine 1767-cysteine 1778, cysteine 1784-cysteine 1824, cysteine 1810-cysteine 1837, cysteine 1842-cysteine 1882, cysteine 1868-cysteine 1895, cysteine 1900-cysteine 1940, cysteine 1926-cysteine 1953, cysteine 1958-cysteine 1998, cysteine 1984-cysteine 2011, cysteine 2016-cysteine 2056, cysteine 2042-cysteine 2073, cysteine 2078-cysteine 2121, cysteine 2107-cysteine 2136, cysteine 2141-cysteine 2181, cysteine 2167-cysteine 2194, cysteine 2199-cysteine 2240, cysteine 2226-cysteine 2254, cysteine 2259-cysteine 2299, cysteine 2285-cysteine 2313, cysteine 2318-cysteine 2358, cysteine 2344-cysteine 2371, cysteine 2376-cysteine 2417, cysteine 2403-cysteine 2430, cysteine 2435-cysteine 2475, cysteine 2461-cysteine 2488, cysteine 2493-cysteine 2533, cysteine 2519-cysteine 2546, cysteine 2551-cysteine 2591, and cysteine 2577-cysteine 2603. Positions 1740 to 1779 (DVDECAVGSDCSEHASCLNTNGSYICSCKPPYTGDGKNCA) constitute an EGF-like 7; calcium-binding domain. An N-linked (GlcNAc...) asparagine glycan is attached at asparagine 1760. Sushi domains lie at 1776 to 1839 (KNCA…SCEA), 1840 to 1897 (ISCG…VCEL), 1898 to 1955 (VKCS…SCQL), 1956 to 2013 (VSCG…QCLA), 2014 to 2075 (VSCD…RCIA), 2076 to 2138 (HFCE…QCIP), 2139 to 2196 (VRCG…TCHP), 2197 to 2256 (VSCN…SCTP), 2257 to 2315 (LNCG…KCVP), 2316 to 2373 (TKCA…VCKL), 2374 to 2432 (VLCQ…ECVP), 2433 to 2490 (VECP…MCRP), 2491 to 2548 (IECP…SCNA), and 2549 to 2605 (IHCS…TCVP). Residues 2634–2641 (DMMEVPYL) form an important for the interaction with integrin ITGA9:ITGB1 region. 14 Sushi domains span residues 2659–2708 (EESL…SCIS), 2709–2766 (IECD…RCEV), 2767–2824 (ISCS…VCLP), 2825–2882 (VDCG…SCVP), 2883–2940 (VRCP…ICKP), 2941–2998 (ATCG…SCLP), 2999–3054 (CTCS…LCEH), 3055–3112 (ADCG…TCEP), 3113–3171 (VSCG…NCSP), 3172–3231 (KTCP…SCIP), 3232–3289 (VVCG…VCRE), 3290–3347 (SRCE…LCKP), 3348–3406 (NPCP…RCEK), and 3407–3463 (ISCG…ICRA). 33 disulfide bridges follow: cysteine 2679–cysteine 2706, cysteine 2711–cysteine 2751, cysteine 2737–cysteine 2764, cysteine 2769–cysteine 2809, cysteine 2795–cysteine 2822, cysteine 2827–cysteine 2867, cysteine 2853–cysteine 2880, cysteine 2885–cysteine 2925, cysteine 2911–cysteine 2938, cysteine 2943–cysteine 2983, cysteine 2969–cysteine 2996, cysteine 3001–cysteine 3040, cysteine 3026–cysteine 3052, cysteine 3057–cysteine 3097, cysteine 3083–cysteine 3110, cysteine 3115–cysteine 3156, cysteine 3141–cysteine 3169, cysteine 3174–cysteine 3214, cysteine 3200–cysteine 3229, cysteine 3234–cysteine 3274, cysteine 3260–cysteine 3287, cysteine 3292–cysteine 3332, cysteine 3318–cysteine 3345, cysteine 3350–cysteine 3391, cysteine 3377–cysteine 3404, cysteine 3409–cysteine 3449, cysteine 3435–cysteine 3461, cysteine 3497–cysteine 3507, cysteine 3501–cysteine 3513, cysteine 3515–cysteine 3524, cysteine 3529–cysteine 3539, cysteine 3533–cysteine 3545, and cysteine 3547–cysteine 3556. EGF-like domains lie at 3493–3525 (EEPI…SRCH) and 3526–3557 (TATC…HDCS).

Interacts (via Sushi domain 21) with ITGA9:ITGB1; thereby inhibits Ca(2+) intracellular signaling and as a result represses vasocontraction. Interacts (via Sushi domain 21) with ITGA4:ITGB1; thereby inhibits Ca(2+) intracellular signaling and as a result represses vasocontraction. Interacts with ANGPT1 and ANGPT2. Interacts with PEAR1 (via extracellular domain). Interacts with HSPG2, TLN1, FN1, COPA, CCT2, IQGAP1, LAMC1 and NID1. Interacts (via C-terminus) with TIE1.

Its subcellular location is the secreted. The protein resides in the nucleus. The protein localises to the cytoplasm. It is found in the membrane. In terms of biological role, required for morphological development, cell alignment and migration of lymphatic endothelial cells during embryonic development, potentially via modulation of ANGPT2-TIE1 signaling and subsequent activation of FOXC2 transcription. Required for embryonic lymphatic vascular development, via mediating the correct formation of the first lymphovenous contact site and tight association of the lymphatic endothelium with the venous endothelium. Represses PRKCA-mediated L-type voltage-gated channel Ca(2+) influx and ROCK-mediated calcium sensitivity in vascular smooth muscle cells, via its interaction with integrins, thereby inhibiting vasocontraction. Promotes platelet activation, via its interaction with PEAR1 and subsequent activation of AKT/mTOR signaling. Plays a role in epidermal development and keratinocyte differentiation, independent of cell-cell adhesion. May play a role in initial cell attachment of stromal osteogenic cells. May promote myoblast cell adhesion when in the presence of integrin ITGA9:ITGB1. The sequence is that of Sushi, von Willebrand factor type A, EGF and pentraxin domain-containing protein 1 (Svep1) from Rattus norvegicus (Rat).